The sequence spans 310 residues: MALVRERRQLNLRLPLPPISDRRFSTSSSSATTTTVAGCNGISACDLEKLNVLGCGNGGIVYKVRHKTTSEIYALKTVNGDMDPIFTRQLMREMEILRRTDSPYVVKCHGIFEKPVVGEVSILMEYMDGGTLESLRGGVTEQKLAGFAKQILKGLSYLHALKIVHRDIKPANLLLNSKNEVKIADFGVSKILVRSLDSCNSYVGTCAYMSPERFDSESSGGSSDIYAGDIWSFGLMMLELLVGHFPLLPPGQRPDWATLMCAVCFGEPPRAPEGCSEEFRSFVECCLRKDSSKRWTAPQLLAHPFLREDL.

A Protein kinase domain is found at 47-306; that stretch reads LEKLNVLGCG…APQLLAHPFL (260 aa). ATP-binding positions include 53–61 and Lys-76; that span reads LGCGNGGIV. Asp-167 serves as the catalytic Proton acceptor. A phosphoserine mark is found at Ser-195 and Ser-201. Thr-205 carries the phosphothreonine modification.

This sequence belongs to the protein kinase superfamily. STE Ser/Thr protein kinase family. MAP kinase kinase subfamily. Phosphorylation at Ser-195 and Ser-201 by MAP kinase kinase kinases positively regulates kinase activity. Autophosphorylated.

The protein localises to the cytoplasm. It is found in the nucleus. The enzyme catalyses L-seryl-[protein] + ATP = O-phospho-L-seryl-[protein] + ADP + H(+). The catalysed reaction is L-threonyl-[protein] + ATP = O-phospho-L-threonyl-[protein] + ADP + H(+). It carries out the reaction L-tyrosyl-[protein] + ATP = O-phospho-L-tyrosyl-[protein] + ADP + H(+). Functionally, MKK9-MPK3/MPK6 module phosphorylates and activates EIN3, leading to the promotion of EIN3-mediated transcription in ethylene signaling. Autophosphorylates and also phosphorylates MPK3 and MPK6. Plays an important role in ethylene and camalexin biosynthesis and in salt stress response. MKK9-MPK6 module positively regulates leaf senescence. The polypeptide is Mitogen-activated protein kinase kinase 9 (MKK9) (Arabidopsis thaliana (Mouse-ear cress)).